Here is a 78-residue protein sequence, read N- to C-terminus: TP53-regulated inhibitor of apoptosis 1-A (78 aa).

Positions 1–52 (MNSVGEECTDMKRDYDQCFNRWFAEKFLKGAGSGDPCTELFRRYRECVQKAI) form a coiled coil. A CHCH domain is found at 5–55 (GEECTDMKRDYDQCFNRWFAEKFLKGAGSGDPCTELFRRYRECVQKAIKDK). Short sequence motifs (cx9C motif) lie at residues 8–18 (CTDMKRDYDQC) and 37–47 (CTELFRRYREC). 2 cysteine pairs are disulfide-bonded: Cys-8-Cys-47 and Cys-18-Cys-37.

The protein belongs to the TRIAP1/MDM35 family. In terms of assembly, monomer. Forms a complex with prelid1 in the mitochondrion intermembrane space. Interacts with prelid3a.

It localises to the mitochondrion. The protein resides in the mitochondrion intermembrane space. The enzyme catalyses a 1,2-diacyl-sn-glycero-3-phosphate(in) = a 1,2-diacyl-sn-glycero-3-phosphate(out). In terms of biological role, involved in the modulation of the mitochondrial apoptotic pathway by ensuring the accumulation of cardiolipin (CL) in mitochondrial membranes. The triap1:prelid1 complex probably functions as a phosphatidic acid (PA) transporter across the mitochondrion intermembrane space to provide PA for cardiolipin CL synthesis in the inner membrane. Likewise, the triap1:prelid3a complex mediates the transfer of phosphatidic acid (PA) between liposomes (in vitro) and probably functions as a PA transporter across the mitochondrion intermembrane space (in vivo). Mediates cell survival by inhibiting activation of caspase-9 which prevents induction of apoptosis. Required for pronephros development; probably involved at an early stage in the formation of pronephric components derived from the somatic layer. This is TP53-regulated inhibitor of apoptosis 1-A (triap1-a) from Xenopus laevis (African clawed frog).